The following is a 349-amino-acid chain: Macrophage-capping protein (349 aa).

Residue Met1 is modified to N-acetylmethionine. Gelsolin-like repeat units lie at residues 28–107 (KLKP…DLFM), 147–222 (KNIR…AEMI), and 264–342 (LTKV…PIFK). A Nuclear localization signal motif is present at residues 138–147 (RKLYQVKGKK). The residue at position 338 (Ser338) is a Phosphoserine.

It belongs to the villin/gelsolin family. Interacts with NUP62. Interacts with NUTF2 and RAN; involved in CAPG nuclear import. Phosphorylated.

The protein resides in the nucleus. Its subcellular location is the cytoplasm. It is found in the melanosome. The protein localises to the cell projection. It localises to the lamellipodium. The protein resides in the ruffle. In terms of biological role, calcium-sensitive protein which reversibly blocks the barbed ends of actin filaments but does not sever preformed actin filaments. May play an important role in macrophage function. May play a role in regulating cytoplasmic and/or nuclear structures through potential interactions with actin. May bind DNA. Uncapping occurs either when Ca(2+) falls or when the concentration of polyphosphoinositide rises, both at low and high Ca(2+). This chain is Macrophage-capping protein (Capg), found in Rattus norvegicus (Rat).